The primary structure comprises 533 residues: Chromosomal replication initiator protein DnaA (533 aa).

Positions 1–72 are domain I, interacts with DnaA modulators; it reads MNDFWQHCSA…DLARDFWNAP (72 aa). Residues 72 to 196 form a domain II region; sequence PIEVQFVLDP…EAADSMYERS (125 aa). The interval 83-113 is disordered; sequence AGQRSPAGATPLAPRAPLPSANPAPVAPGPA. Over residues 96-110 the composition is skewed to pro residues; the sequence is PRAPLPSANPAPVAP. The domain III, AAA+ region stretch occupies residues 197–413; that stretch reads KLNPVLTFDN…GALRKILAYS (217 aa). Residues Gly-241, Gly-243, Lys-244, and Thr-245 each coordinate ATP. The segment at 414-533 is domain IV, binds dsDNA; it reads KFHGREITIE…LHVLEQTLKG (120 aa).

The protein belongs to the DnaA family. In terms of assembly, oligomerizes as a right-handed, spiral filament on DNA at oriC.

The protein localises to the cytoplasm. Its function is as follows. Plays an essential role in the initiation and regulation of chromosomal replication. ATP-DnaA binds to the origin of replication (oriC) to initiate formation of the DNA replication initiation complex once per cell cycle. Binds the DnaA box (a 9 base pair repeat at the origin) and separates the double-stranded (ds)DNA. Forms a right-handed helical filament on oriC DNA; dsDNA binds to the exterior of the filament while single-stranded (ss)DNA is stabiized in the filament's interior. The ATP-DnaA-oriC complex binds and stabilizes one strand of the AT-rich DNA unwinding element (DUE), permitting loading of DNA polymerase. After initiation quickly degrades to an ADP-DnaA complex that is not apt for DNA replication. Binds acidic phospholipids. The protein is Chromosomal replication initiator protein DnaA of Burkholderia mallei (strain SAVP1).